Here is a 1449-residue protein sequence, read N- to C-terminus: Disease resistance protein RPP5 (1449 aa).

The 169-residue stretch at 10–178 (RRYDVFPSFS…KISNDVSNKL (169 aa)) folds into the TIR domain. Glu85 is a catalytic residue. One can recognise an NB-ARC domain in the interval 192–446 (EAHIEAIKSV…IACLFNGFEV (255 aa)). LRR repeat units follow at residues 549–573 (MRNL…VYLP), 574–595 (LKLR…TFKA), 597–618 (YLVN…TLPL), 619–642 (GSLK…SNAR), 644–665 (LEEL…IQNA), 687–710 (MCNL…VYFP), 712–732 (KLRL…NFKV), 733–755 (EYLV…TQPL), 756–779 (GRLK…SLAI), 802–825 (AIKL…DLNL), 826–849 (ESLE…KMGC), 915–939 (LGSL…SKAT), 941–962 (LKHL…IGNL), 963–985 (QKLV…DVNL), 986–1011 (SSLE…SIKW), 1028–1052 (ATKL…IGNL), 1053–1077 (QNLR…NLSS), 1096–1119 (STNI…IEDF), and 1120–1143 (TRLR…IFRL).

In terms of assembly, interacts with RSH1.

The catalysed reaction is NAD(+) + H2O = ADP-D-ribose + nicotinamide + H(+). TIR-NB-LRR receptor-like protein that confers resistance to the pathogen Hyaloperonospora arabidopsis isolate Noco2 (downy mildew disease). Confers resistance to H.arabidopsis isolates Emoy2, Emwa1 and Noco2. This chain is Disease resistance protein RPP5, found in Arabidopsis thaliana (Mouse-ear cress).